Reading from the N-terminus, the 898-residue chain is Alanine--tRNA ligase (898 aa).

4 residues coordinate Zn(2+): His582, His586, Cys685, and His689.

It belongs to the class-II aminoacyl-tRNA synthetase family. The cofactor is Zn(2+).

The protein resides in the cytoplasm. The enzyme catalyses tRNA(Ala) + L-alanine + ATP = L-alanyl-tRNA(Ala) + AMP + diphosphate. Its function is as follows. Catalyzes the attachment of alanine to tRNA(Ala) in a two-step reaction: alanine is first activated by ATP to form Ala-AMP and then transferred to the acceptor end of tRNA(Ala). Also edits incorrectly charged Ser-tRNA(Ala) and Gly-tRNA(Ala) via its editing domain. The sequence is that of Alanine--tRNA ligase from Mycolicibacterium vanbaalenii (strain DSM 7251 / JCM 13017 / BCRC 16820 / KCTC 9966 / NRRL B-24157 / PYR-1) (Mycobacterium vanbaalenii).